A 1315-amino-acid polypeptide reads, in one-letter code: Claspin (1315 aa).

2 disordered regions span residues 22 to 276 (EAAD…AARL) and 345 to 474 (PADA…EQKT). Residues S26, S42, S46, S53, S65, and S67 each carry the phosphoserine modification. Residues 65 to 74 (SDSEAEDRDD) are compositionally biased toward acidic residues. The span at 91-101 (NLHSGKSQSRS) shows a compositional bias: polar residues. The span at 108–118 (DSDESDMEETP) shows a compositional bias: acidic residues. Residues S109, S112, and S119 each carry the phosphoserine modification. Residues 119 to 128 (SQESPETQEA) are compositionally biased toward polar residues. Composition is skewed to basic and acidic residues over residues 153–178 (LLRE…MEKI) and 186–197 (TRCEESDADRPL). Residues 159-187 (EGKAKSKRRLEKEERTMEKIRRLKKKETR) are a coiled coil. The segment covering 205–228 (EDSDLFETGLEEENDSALEDEESL) has biased composition (acidic residues). Residue S220 is modified to Phosphoserine. Residues 235–245 (VKNKVKNRKKK) are compositionally biased toward basic residues. S255 carries the phosphoserine modification. 2 stretches are compositionally biased toward basic and acidic residues: residues 391–415 (ACGK…DDRP) and 455–470 (EELK…EGMP). S522 is modified (phosphoserine). Residues 599-626 (EKLQMLKAKLQEAMKLRRLEERQKRQAL) adopt a coiled-coil conformation. A disordered region spans residues 625–691 (ALFKLDNEDG…SSDIGKSVAL (67 aa)). Residues 632–657 (EDGFEEEEEEEEMTDESEEDGEEETT) are compositionally biased toward acidic residues. Over residues 669-679 (KDEKETDKENT) the composition is skewed to basic and acidic residues. Residues S698, S701, S709, S722, and S740 each carry the phosphoserine modification. Residues 713 to 750 (MGYFPTEEKSETDEYLAKQSDKLDEDDSSSLLTKESSH) are disordered. A compositionally biased stretch (low complexity) spans 741 to 750 (SSLLTKESSH). A phosphoserine mark is found at S785, S787, S810, S816, and S823. The residue at position 868 (K868) is an N6-acetyllysine. 2 CKB motif repeats span residues 887–896 (ELLDLCTGQF) and 917–926 (ELLNLCSGKF). Residue T893 is modified to Phosphothreonine; by CHEK1. Disordered stretches follow at residues 924–1002 (GKFP…NDEE) and 1032–1052 (EDEA…DGEE). Position 932 is a phosphoserine (S932). Residues 954–963 (EALALCSGSF) form a CKB motif 3 repeat. The interval 966-1063 (DREEEGEEEE…DEYEEDVIDE (98 aa)) is acidic patch. Composition is skewed to acidic residues over residues 967-977 (REEEGEEEEFG), 990-1002 (SDED…NDEE), and 1043-1052 (GSEDEYDGEE). 3 positions are modified to phosphoserine: S990, S996, and S998. Positions 1001-1036 (EELALDLEDDEEELLKQSEKMKRQMRLKKYLEDEAE) form a coiled coil. Phosphoserine occurs at positions 1133 and 1265. The disordered stretch occupies residues 1264 to 1315 (LSPTKAEAAKDSSKPQVRRRGLSSMMSPSPKRLKTNGSSPGPKRSIFRYLES).

The protein belongs to the claspin family. In terms of assembly, interacts (phosphorylation-dependent) with CHEK1; regulates CLSPN function in checkpoint for DNA damage and replication. Interacts with ATR and RAD9A and these interactions are slightly reduced during checkpoint activation. Interacts with BRCA1 and this interaction increases during checkpoint activation. Interacts with TIMELESS; the interaction is required for leading-strand replication. Associates with the MCM2-7 complex and other replisome factors. Interacts (via the acidic patch) with CDC7; the interaction is required for phosphorylation of MCM proteins and CLASPIN by CDC7. Interacts with PCNA. Interacts with FZR1. Post-translationally, phosphorylated. Undergoes ATR-dependent phosphorylation by CHEK1 during activation of DNA replication or damage checkpoints. Phosphorylation by CSNK1G1/CK1 promotes CHEK1 binding. Phosphorylated by CDC7 during DNA replication, phosphorylation inhibits interaction between the acidic patch and N-terminal segments leading to increased binding to DNA and PCNA. Ubiquitinated by the anaphase promoting complex/cyclosome (APC/C) during G1 phase, leading to its degradation by the proteasome. Ubiquitination is mediated via its interaction with FZR1/CDH1. Following DNA damage, it is deubiquitinated by USP28 in G2 phase, preventing its degradation. In terms of processing, proteolytically cleaved by caspase-7 (CASP7) in response to apoptosis, leading to its inactivation.

It is found in the nucleus. In terms of biological role, required for checkpoint mediated cell cycle arrest in response to inhibition of DNA replication or to DNA damage induced by both ionizing and UV irradiation. Adapter protein which binds to BRCA1 and the checkpoint kinase CHEK1 and facilitates the ATR-dependent phosphorylation of both proteins. Also required to maintain normal rates of replication fork progression during unperturbed DNA replication. Binds directly to DNA, with particular affinity for branched or forked molecules and interacts with multiple protein components of the replisome such as the MCM2-7 complex and TIMELESS. Important for initiation of DNA replication, recruits kinase CDC7 to phosphorylate MCM2-7 components. The protein is Claspin (Clspn) of Mus musculus (Mouse).